Consider the following 92-residue polypeptide: Evasin P675 (92 aa).

A signal peptide spans methionine 1–alanine 24. Intrachain disulfides connect cysteine 44–cysteine 63, cysteine 48–cysteine 65, and cysteine 59–cysteine 76. An N-linked (GlcNAc...) asparagine glycan is attached at asparagine 47. Asparagine 70 carries N-linked (GlcNAc...) asparagine glycosylation.

It is found in the secreted. Salivary chemokine-binding protein which binds to host chemokines CXCL1, CXCL2, CXCL3, CXCL4, CXCL5, CXCL6, CXCL10, CXCL11 and CXCL13. This is Evasin P675 from Ixodes ricinus (Common tick).